A 155-amino-acid polypeptide reads, in one-letter code: Protein phosphatase 1 regulatory subunit 17 (155 aa).

The segment at 41–73 (KKKPRKGKNVQATLNVESDQKKPRRKDTPALHI) is disordered. A compositionally biased stretch (basic and acidic residues) spans 58–69 (SDQKKPRRKDTP). A phosphothreonine; by PKG/PRKG1 mark is found at Thr-68 and Thr-119.

Substrate for cGMP-dependent protein kinase. Phosphorylated by PRKG1 isoform alpha. Phosphorylation of Thr-68 and Thr-119 is required for its phosphatase activity. In terms of processing, substrate for cGMP-dependent protein kinase. Highly expressed in cerebellum.

Its function is as follows. Inhibits phosphatase activities of protein phosphatase 1 (PP1) and protein phosphatase 2A (PP2A) complexes. In Homo sapiens (Human), this protein is Protein phosphatase 1 regulatory subunit 17 (PPP1R17).